A 332-amino-acid chain; its full sequence is Ribose-phosphate pyrophosphokinase (332 aa).

ATP-binding positions include 43-45 (DGE) and 102-103 (RQ). Mg(2+)-binding residues include histidine 136 and aspartate 176. Lysine 199 is a catalytic residue. D-ribose 5-phosphate-binding positions include arginine 201, aspartate 225, and 229–233 (DTGGT).

Belongs to the ribose-phosphate pyrophosphokinase family. Class I subfamily. In terms of assembly, homohexamer. It depends on Mg(2+) as a cofactor.

The protein localises to the cytoplasm. It catalyses the reaction D-ribose 5-phosphate + ATP = 5-phospho-alpha-D-ribose 1-diphosphate + AMP + H(+). Its pathway is metabolic intermediate biosynthesis; 5-phospho-alpha-D-ribose 1-diphosphate biosynthesis; 5-phospho-alpha-D-ribose 1-diphosphate from D-ribose 5-phosphate (route I): step 1/1. Functionally, involved in the biosynthesis of the central metabolite phospho-alpha-D-ribosyl-1-pyrophosphate (PRPP) via the transfer of pyrophosphoryl group from ATP to 1-hydroxyl of ribose-5-phosphate (Rib-5-P). This Mycoplasma genitalium (strain ATCC 33530 / DSM 19775 / NCTC 10195 / G37) (Mycoplasmoides genitalium) protein is Ribose-phosphate pyrophosphokinase.